Consider the following 137-residue polypeptide: Large ribosomal subunit protein uL16 (137 aa).

It belongs to the universal ribosomal protein uL16 family. As to quaternary structure, part of the 50S ribosomal subunit.

Binds 23S rRNA and is also seen to make contacts with the A and possibly P site tRNAs. The chain is Large ribosomal subunit protein uL16 from Lawsonia intracellularis (strain PHE/MN1-00).